A 451-amino-acid polypeptide reads, in one-letter code: 2-succinylbenzoate--CoA ligase (451 aa).

The protein belongs to the ATP-dependent AMP-binding enzyme family. MenE subfamily.

It carries out the reaction 2-succinylbenzoate + ATP + CoA = 2-succinylbenzoyl-CoA + AMP + diphosphate. Its pathway is quinol/quinone metabolism; 1,4-dihydroxy-2-naphthoate biosynthesis; 1,4-dihydroxy-2-naphthoate from chorismate: step 5/7. It participates in quinol/quinone metabolism; menaquinone biosynthesis. In terms of biological role, converts 2-succinylbenzoate (OSB) to 2-succinylbenzoyl-CoA (OSB-CoA). In Lactococcus lactis subsp. lactis (strain IL1403) (Streptococcus lactis), this protein is 2-succinylbenzoate--CoA ligase.